The primary structure comprises 268 residues: Energy-coupling factor transporter transmembrane protein EcfT (268 aa).

Helical transmembrane passes span 28-48, 63-83, 107-127, 152-172, and 248-268; these read FVFL…YLWV, LWFL…TLMM, ILEG…ATIM, LPVH…PTLM, and ISLT…YSGV.

It belongs to the energy-coupling factor EcfT family. As to quaternary structure, forms a stable energy-coupling factor (ECF) transporter complex composed of 2 membrane-embedded substrate-binding proteins (S component), 2 ATP-binding proteins (A component) and 2 transmembrane proteins (T component). May be able to interact with more than 1 S component at a time.

The protein localises to the cell membrane. Transmembrane (T) component of an energy-coupling factor (ECF) ABC-transporter complex. Unlike classic ABC transporters this ECF transporter provides the energy necessary to transport a number of different substrates. The sequence is that of Energy-coupling factor transporter transmembrane protein EcfT from Staphylococcus aureus (strain 04-02981).